A 784-amino-acid chain; its full sequence is Endonuclease MutS2 (784 aa).

335–342 (GPNTGGKT) provides a ligand contact to ATP. The Smr domain maps to 709–784 (LDLRGERYED…GTGVTIVELK (76 aa)).

It belongs to the DNA mismatch repair MutS family. MutS2 subfamily. As to quaternary structure, homodimer. Binds to stalled ribosomes, contacting rRNA.

Endonuclease that is involved in the suppression of homologous recombination and thus may have a key role in the control of bacterial genetic diversity. In terms of biological role, acts as a ribosome collision sensor, splitting the ribosome into its 2 subunits. Detects stalled/collided 70S ribosomes which it binds and splits by an ATP-hydrolysis driven conformational change. Acts upstream of the ribosome quality control system (RQC), a ribosome-associated complex that mediates the extraction of incompletely synthesized nascent chains from stalled ribosomes and their subsequent degradation. Probably generates substrates for RQC. In Geobacillus sp. (strain WCH70), this protein is Endonuclease MutS2.